A 202-amino-acid chain; its full sequence is Transmembrane protein 223 (202 aa).

The Mitochondrial matrix segment spans residues Met1–Arg43. The chain crosses the membrane as a helical span at residues Phe44–Ile64. Residues Ala65–Gly97 lie on the Mitochondrial intermembrane side of the membrane. The chain crosses the membrane as a helical span at residues Leu98–Leu118. At Arg119 to Leu202 the chain is on the mitochondrial matrix side.

The protein belongs to the TMEM223 family. Associates with the mitochondrial ribosome.

Its subcellular location is the mitochondrion inner membrane. Its function is as follows. Mitochondrial ribosome-associated protein involved in the first steps of cytochrome c oxidase complex (complex IV) biogenesis. Stimulates the translation of MT-CO1 mRNA and is a constituent of early MT-CO1 assembly intermediates. The protein is Transmembrane protein 223 of Bos taurus (Bovine).